The primary structure comprises 78 residues: Cytochrome c oxidase subunit 6b-2 (78 aa).

A CHCH domain is found at 22–65; the sequence is TRHCFTRYIEFHRCTTAKGEESNDCERFAKYYRALCPGEWVDKW. The Cx9C motif signature appears at 25 to 35; sequence CFTRYIEFHRC. 2 disulfide bridges follow: C25/C57 and C35/C46. The short motif at 46 to 57 is the Cx10C motif element; it reads CERFAKYYRALC.

Belongs to the cytochrome c oxidase subunit 6B (TC 3.D.4.8) family. As to expression, specifically expressed in roots.

The protein resides in the mitochondrion. Functionally, this protein is one of the nuclear-coded polypeptide chains of cytochrome c oxidase, the terminal oxidase in mitochondrial electron transport. This protein may be one of the heme-binding subunits of the oxidase. In Arabidopsis thaliana (Mouse-ear cress), this protein is Cytochrome c oxidase subunit 6b-2 (COX6B-2).